A 393-amino-acid chain; its full sequence is NAD(P)H-quinone oxidoreductase subunit H, chloroplastic (393 aa).

Belongs to the complex I 49 kDa subunit family. In terms of assembly, NDH is composed of at least 16 different subunits, 5 of which are encoded in the nucleus.

It localises to the plastid. It is found in the chloroplast thylakoid membrane. The catalysed reaction is a plastoquinone + NADH + (n+1) H(+)(in) = a plastoquinol + NAD(+) + n H(+)(out). The enzyme catalyses a plastoquinone + NADPH + (n+1) H(+)(in) = a plastoquinol + NADP(+) + n H(+)(out). NDH shuttles electrons from NAD(P)H:plastoquinone, via FMN and iron-sulfur (Fe-S) centers, to quinones in the photosynthetic chain and possibly in a chloroplast respiratory chain. The immediate electron acceptor for the enzyme in this species is believed to be plastoquinone. Couples the redox reaction to proton translocation, and thus conserves the redox energy in a proton gradient. The sequence is that of NAD(P)H-quinone oxidoreductase subunit H, chloroplastic from Olimarabidopsis pumila (Dwarf rocket).